Here is a 113-residue protein sequence, read N- to C-terminus: Heavy metal-associated isoprenylated plant protein 15 (113 aa).

An HMA domain is found at 1–65 (MIVWMGVYDQ…KWGKAKLTLY (65 aa)). Positions 69–89 (DALKEAKIAEAKQKREEIERE) form a coiled coil. The residue at position 110 (Cys110) is a Cysteine methyl ester. Cys110 carries S-farnesyl cysteine lipidation. Positions 111–113 (VIC) are cleaved as a propeptide — removed in mature form.

It belongs to the HIPP family. Expressed in embryo sacs.

Probable heavy-metal-binding protein. This is Heavy metal-associated isoprenylated plant protein 15 from Arabidopsis thaliana (Mouse-ear cress).